The chain runs to 299 residues: Protoheme IX farnesyltransferase 1 (299 aa).

The next 9 helical transmembrane spans lie at 24–44 (VVAL…PGVP), 46–66 (AAVV…AAMV), 97–117 (LLVA…CCNA), 118–138 (LTAW…TLLL), 146–166 (IVIG…AVNG), 170–190 (AFAL…FWAL), 217–237 (LSIV…VALG), 239–259 (AGAI…FLAV), and 278–298 (IWYL…LIPL).

The protein belongs to the UbiA prenyltransferase family. Protoheme IX farnesyltransferase subfamily.

It localises to the cell inner membrane. The catalysed reaction is heme b + (2E,6E)-farnesyl diphosphate + H2O = Fe(II)-heme o + diphosphate. It participates in porphyrin-containing compound metabolism; heme O biosynthesis; heme O from protoheme: step 1/1. In terms of biological role, converts heme B (protoheme IX) to heme O by substitution of the vinyl group on carbon 2 of heme B porphyrin ring with a hydroxyethyl farnesyl side group. This chain is Protoheme IX farnesyltransferase 1, found in Chromobacterium violaceum (strain ATCC 12472 / DSM 30191 / JCM 1249 / CCUG 213 / NBRC 12614 / NCIMB 9131 / NCTC 9757 / MK).